We begin with the raw amino-acid sequence, 193 residues long: Ion-translocating oxidoreductase complex subunit A (193 aa).

The next 6 helical transmembrane spans lie at 5-25, 39-59, 62-82, 102-122, 134-154, and 171-191; these read LLLF…FLGL, IGMG…AWMV, FILL…LVIA, LLGI…VALL, AVYG…FAAI, and SIAL…TGLV.

The protein belongs to the NqrDE/RnfAE family. The complex is composed of six subunits: RnfA, RnfB, RnfC, RnfD, RnfE and RnfG.

The protein localises to the cell inner membrane. Functionally, part of a membrane-bound complex that couples electron transfer with translocation of ions across the membrane. This chain is Ion-translocating oxidoreductase complex subunit A, found in Yersinia pestis bv. Antiqua (strain Nepal516).